The chain runs to 379 residues: Chaperone protein DnaJ (379 aa).

Residues 6-71 enclose the J domain; the sequence is DYYEVLGVDK…QKRSRYDQFG (66 aa). A CR-type zinc finger spans residues 138-220; it reads GVEREINVSK…CNGKGRLRST (83 aa). Zn(2+) is bound by residues Cys-151, Cys-154, Cys-168, Cys-171, Cys-194, Cys-197, Cys-208, and Cys-211. CXXCXGXG motif repeat units follow at residues 151–158, 168–175, 194–201, and 208–215; these read CSKCTGSG, CNHCNGTG, CDACKGEG, and CPACNGKG.

The protein belongs to the DnaJ family. In terms of assembly, homodimer. The cofactor is Zn(2+).

It is found in the cytoplasm. Functionally, participates actively in the response to hyperosmotic and heat shock by preventing the aggregation of stress-denatured proteins and by disaggregating proteins, also in an autonomous, DnaK-independent fashion. Unfolded proteins bind initially to DnaJ; upon interaction with the DnaJ-bound protein, DnaK hydrolyzes its bound ATP, resulting in the formation of a stable complex. GrpE releases ADP from DnaK; ATP binding to DnaK triggers the release of the substrate protein, thus completing the reaction cycle. Several rounds of ATP-dependent interactions between DnaJ, DnaK and GrpE are required for fully efficient folding. Also involved, together with DnaK and GrpE, in the DNA replication of plasmids through activation of initiation proteins. This is Chaperone protein DnaJ from Ruminiclostridium cellulolyticum (strain ATCC 35319 / DSM 5812 / JCM 6584 / H10) (Clostridium cellulolyticum).